Here is a 515-residue protein sequence, read N- to C-terminus: Bifunctional purine biosynthesis protein PurH (515 aa).

In terms of domain architecture, MGS-like spans 1 to 145; sequence MTKRALISVS…KNHASVTVVV (145 aa).

It belongs to the PurH family.

It carries out the reaction (6R)-10-formyltetrahydrofolate + 5-amino-1-(5-phospho-beta-D-ribosyl)imidazole-4-carboxamide = 5-formamido-1-(5-phospho-D-ribosyl)imidazole-4-carboxamide + (6S)-5,6,7,8-tetrahydrofolate. The enzyme catalyses IMP + H2O = 5-formamido-1-(5-phospho-D-ribosyl)imidazole-4-carboxamide. It participates in purine metabolism; IMP biosynthesis via de novo pathway; 5-formamido-1-(5-phospho-D-ribosyl)imidazole-4-carboxamide from 5-amino-1-(5-phospho-D-ribosyl)imidazole-4-carboxamide (10-formyl THF route): step 1/1. Its pathway is purine metabolism; IMP biosynthesis via de novo pathway; IMP from 5-formamido-1-(5-phospho-D-ribosyl)imidazole-4-carboxamide: step 1/1. This chain is Bifunctional purine biosynthesis protein PurH, found in Streptococcus gordonii (strain Challis / ATCC 35105 / BCRC 15272 / CH1 / DL1 / V288).